A 315-amino-acid polypeptide reads, in one-letter code: Ribosomal RNA small subunit methyltransferase H (315 aa).

S-adenosyl-L-methionine-binding positions include Gly-35–His-37, Asp-55, Phe-80, Asp-102, and Gln-109.

The protein belongs to the methyltransferase superfamily. RsmH family.

The protein localises to the cytoplasm. It catalyses the reaction cytidine(1402) in 16S rRNA + S-adenosyl-L-methionine = N(4)-methylcytidine(1402) in 16S rRNA + S-adenosyl-L-homocysteine + H(+). Specifically methylates the N4 position of cytidine in position 1402 (C1402) of 16S rRNA. This chain is Ribosomal RNA small subunit methyltransferase H, found in Shewanella halifaxensis (strain HAW-EB4).